Consider the following 640-residue polypeptide: 1,4-alpha-glucan branching enzyme GlgB (640 aa).

Residue aspartate 318 is the Nucleophile of the active site. Residue glutamate 371 is the Proton donor of the active site.

Belongs to the glycosyl hydrolase 13 family. GlgB subfamily. Monomer.

It carries out the reaction Transfers a segment of a (1-&gt;4)-alpha-D-glucan chain to a primary hydroxy group in a similar glucan chain.. Its pathway is glycan biosynthesis; glycogen biosynthesis. In terms of biological role, catalyzes the formation of the alpha-1,6-glucosidic linkages in glycogen by scission of a 1,4-alpha-linked oligosaccharide from growing alpha-1,4-glucan chains and the subsequent attachment of the oligosaccharide to the alpha-1,6 position. This is 1,4-alpha-glucan branching enzyme GlgB from Francisella tularensis subsp. tularensis (strain FSC 198).